The chain runs to 415 residues: Serine hydroxymethyltransferase (415 aa).

(6S)-5,6,7,8-tetrahydrofolate-binding positions include leucine 117 and 121–123; that span reads GHL. N6-(pyridoxal phosphate)lysine is present on lysine 226. Glutamate 241 contributes to the (6S)-5,6,7,8-tetrahydrofolate binding site.

Belongs to the SHMT family. Homodimer. It depends on pyridoxal 5'-phosphate as a cofactor.

It is found in the cytoplasm. It catalyses the reaction (6R)-5,10-methylene-5,6,7,8-tetrahydrofolate + glycine + H2O = (6S)-5,6,7,8-tetrahydrofolate + L-serine. The protein operates within one-carbon metabolism; tetrahydrofolate interconversion. It functions in the pathway amino-acid biosynthesis; glycine biosynthesis; glycine from L-serine: step 1/1. Catalyzes the reversible interconversion of serine and glycine with tetrahydrofolate (THF) serving as the one-carbon carrier. This reaction serves as the major source of one-carbon groups required for the biosynthesis of purines, thymidylate, methionine, and other important biomolecules. Also exhibits THF-independent aldolase activity toward beta-hydroxyamino acids, producing glycine and aldehydes, via a retro-aldol mechanism. The polypeptide is Serine hydroxymethyltransferase (Bacillus subtilis (strain 168)).